A 610-amino-acid chain; its full sequence is UvrABC system protein C (610 aa).

The region spanning 16 to 94 (SQPGVYRMYD…IKLYQPRYNV (79 aa)) is the GIY-YIG domain. In terms of domain architecture, UVR spans 204–239 (QQVLHQLIERMENASKALNFEEAARIRDQIQAVRRV).

This sequence belongs to the UvrC family. In terms of assembly, interacts with UvrB in an incision complex.

The protein localises to the cytoplasm. Its function is as follows. The UvrABC repair system catalyzes the recognition and processing of DNA lesions. UvrC both incises the 5' and 3' sides of the lesion. The N-terminal half is responsible for the 3' incision and the C-terminal half is responsible for the 5' incision. This Serratia proteamaculans (strain 568) protein is UvrABC system protein C.